Reading from the N-terminus, the 267-residue chain is MAKPYDPKDFYYRKAKKQGLRARSAFKIEEILHRHRLLGRGDAVLDLGAAPGGFLQILAEAVGEKGVAVGVDLEPIRNLGKRWVRTAIVDLLAPDALDKIRLLHDGRFRLVTSDMAPKTIGIKVTDEARSLELVRMALSVAEQVLVPGGAFVAKVFMGGDFPALKRELQGRFAAMHVIRPEAVRESSYEVYVLGTGFRGRAAAVAPAAVKAEAPRAPAPPEQAAAPEEATAPATRAARQKPAPAKKPAAAKRPAARKRAAKKPARRA.

Gly52, Phe54, Asp72, Asp90, and Asp114 together coordinate S-adenosyl-L-methionine. Catalysis depends on Lys154, which acts as the Proton acceptor. The segment covering 212–252 (EAPRAPAPPEQAAAPEEATAPATRAARQKPAPAKKPAAAKR) has biased composition (low complexity). The interval 212–267 (EAPRAPAPPEQAAAPEEATAPATRAARQKPAPAKKPAAAKRPAARKRAAKKPARRA) is disordered. Over residues 253–267 (PAARKRAAKKPARRA) the composition is skewed to basic residues.

This sequence belongs to the class I-like SAM-binding methyltransferase superfamily. RNA methyltransferase RlmE family.

The protein localises to the cytoplasm. It carries out the reaction uridine(2552) in 23S rRNA + S-adenosyl-L-methionine = 2'-O-methyluridine(2552) in 23S rRNA + S-adenosyl-L-homocysteine + H(+). In terms of biological role, specifically methylates the uridine in position 2552 of 23S rRNA at the 2'-O position of the ribose in the fully assembled 50S ribosomal subunit. The chain is Ribosomal RNA large subunit methyltransferase E from Anaeromyxobacter dehalogenans (strain 2CP-C).